The sequence spans 269 residues: Chromosome-partitioning protein Spo0J (269 aa).

The stimulates ATPase activity of Soj by 8% stretch occupies residues 1–20; sequence MSRKPSGLGRGLEALLPKTG. The H-T-H motif DNA-binding region spans 137 to 156; that stretch reads QEEVARRVGKARSTVANALR. The tract at residues 223–269 is required for DNA-binding; may be responsible for dimerization; the sequence is PSPLSLELSRHLGLPVRVVGGKKGKVVIQYRSLEELEALLRRLGYQA.

Belongs to the ParB family. In terms of assembly, homodimer, probably via the C-terminal 46 residues. Dimerization of the N-terminal H-T-H region may require DNA-binding. Probably interacts with ATPase Soj.

In terms of biological role, probably involved in chromosome partitioning. Binds to a plasmid centromere-like site parS. Stimulates the ATPase activity 10-fold of Soj; the first 20 residues may be responsible. This chain is Chromosome-partitioning protein Spo0J (spo0C), found in Thermus thermophilus (strain ATCC BAA-163 / DSM 7039 / HB27).